Consider the following 578-residue polypeptide: Vacuolar protein 8 (578 aa).

9 ARM repeats span residues 58–95 (NRAETDFFRGEPLSALSTLVYSDNVDLQRSASLTFAEI), 96–135 (TERDVREVDRDTLEPILFLLQSSDIEVQRAASAALGNLAV), 137–176 (ADNKVLIVALGGLAPLIRQMMSPNVEVQCNAVGCITNLAT), 178–217 (EDNKAKIARSGALGPLIRLAKSKDMRVQRNATGALLNMTH), 219–258 (DDNRQQLVNAGAIPVLVQLLSSSDVDVQYYCTTALSNIAV), 262–301 (NRKRLAQTESRLVQSLVHLMDSSTPKVQCQAALALRNLAS), 303–342 (EKYQLEIVRAKGLPPLLRLLQSSYLPLILSAVACIRNISI), 344–384 (PLNE…NLAA), and 428–467 (DELKPHLLNLGVFDVLIPLTESESIEVQGNSAAALGNLSS).

This sequence belongs to the beta-catenin family.

The protein resides in the vacuole membrane. In terms of biological role, functions in both vacuole inheritance and protein targeting from the cytoplasm to vacuole. In Aspergillus oryzae (strain ATCC 42149 / RIB 40) (Yellow koji mold), this protein is Vacuolar protein 8 (vac8).